The following is a 341-amino-acid chain: UDP-glucose 4-epimerase (341 aa).

It belongs to the polysaccharide synthase family.

It catalyses the reaction UDP-alpha-D-glucose = UDP-alpha-D-galactose. Functionally, epimerizes UDP-galactose to UDP-glucose. This Rickettsia akari (strain Hartford) protein is UDP-glucose 4-epimerase (capD).